Consider the following 376-residue polypeptide: Chaperone protein DnaJ (376 aa).

The region spanning 5–70 is the J domain; the sequence is DYYEILGVER…QKRAAYDKFG (66 aa). The CR-type zinc finger occupies 131-209; that stretch reads GVSKEIKVPT…CHGDGRVQKT (79 aa). C144, C147, C161, C164, C183, C186, C197, and C200 together coordinate Zn(2+). CXXCXGXG motif repeat units follow at residues 144–151, 161–168, 183–190, and 197–204; these read CDECHGSG, CPTCHGSG, CPHCHGKG, and CRKCHGDG.

Belongs to the DnaJ family. As to quaternary structure, homodimer. Zn(2+) serves as cofactor.

The protein localises to the cytoplasm. In terms of biological role, participates actively in the response to hyperosmotic and heat shock by preventing the aggregation of stress-denatured proteins and by disaggregating proteins, also in an autonomous, DnaK-independent fashion. Unfolded proteins bind initially to DnaJ; upon interaction with the DnaJ-bound protein, DnaK hydrolyzes its bound ATP, resulting in the formation of a stable complex. GrpE releases ADP from DnaK; ATP binding to DnaK triggers the release of the substrate protein, thus completing the reaction cycle. Several rounds of ATP-dependent interactions between DnaJ, DnaK and GrpE are required for fully efficient folding. Also involved, together with DnaK and GrpE, in the DNA replication of plasmids through activation of initiation proteins. The sequence is that of Chaperone protein DnaJ from Tolumonas auensis (strain DSM 9187 / NBRC 110442 / TA 4).